Here is a 953-residue protein sequence, read N- to C-terminus: Atromentin synthetase invA2 (953 aa).

The tract at residues 38–460 (RAVSQYPNHE…SGRIKDTVIV (423 aa)) is adenylation (A) domain. In terms of domain architecture, Carrier spans 592–670 (APSTETEKTL…SLAKYVDSLI (79 aa)). A thiolation and peptide carrier (T) domain region spans residues 597 to 667 (TEKTLAGIYA…VISSLAKYVD (71 aa)). At S629 the chain carries O-(pantetheine 4'-phosphoryl)serine. Residues 693–795 (PIFMVHPGVG…FTGLINIPPH (103 aa)) form a thioesterase (TE) domain region.

The protein belongs to the ATP-dependent AMP-binding enzyme family.

The protein operates within secondary metabolite biosynthesis. Its function is as follows. An L-tyrosine:2-oxoglutarate aminotransferase (probably invD) and atromentin synthetase invA2 catalyze consecutive steps to turn over L-tyrosine into atromentin, which represents the generic precursor molecule for the entire terphenylquinone and pulvinic acid family of pigments, which are widely distributed secondary metabolites in homobasidiomycetes. The first step catalyzed by the aminotransferase converts L-tyrosine in to 4-hydroxyphenylpyruvate (4-HPP). Adenylation of two 4-HPP monomers by the invA2 adenylation (A) domain, covalent tethering of the monomers as a thioester and oxoester onto the invA2 thiolation (T) and thioesterase (TE) domains, respectively, and symmetric C-C-bond formation between two monomers catalyzed by the invA2 TE domain leads to atromentin. The chain is Atromentin synthetase invA2 (invA2) from Paxillus involutus (Naked brimcap).